Reading from the N-terminus, the 292-residue chain is Cytochrome c1, heme protein, mitochondrial (292 aa).

Residues 1-46 (MFRSFSTAAKQAVKGTYVQRAIVGGAAVVGIGASTMLYADSLTADA) constitute a mitochondrion transit peptide. Residues 47–253 (MTAAEHGLHA…SEPEHDERKR (207 aa)) are Mitochondrial intermembrane-facing. The Cytochrome c domain occupies 73–226 (SSIRRGYQVY…DLVEYEDGTP (154 aa)). Residues Cys-86, Cys-89, and His-90 each contribute to the heme c site. The interval 117–137 (FEYDDEPDDQGNPKKRPGKLA) is disordered. Heme c is bound at residue Met-210. Residues 254–272 (LGLKAMIVLSSLYLLSVWV) form a helical membrane-spanning segment. At 273-292 (KKFKWASIKSRKIVFNPPKK) the chain is on the mitochondrial matrix side.

It belongs to the cytochrome c family. Component of the ubiquinol-cytochrome c oxidoreductase (cytochrome b-c1 complex, complex III, CIII), a multisubunit enzyme composed of 3 respiratory subunits cytochrome b, cytochrome c1 and Rieske protein, 2 core protein subunits, and additional low-molecular weight protein subunits. The complex exists as an obligatory dimer and forms supercomplexes (SCs) in the inner mitochondrial membrane with cytochrome c oxidase (complex IV, CIV). Heme c serves as cofactor.

The protein resides in the mitochondrion inner membrane. The catalysed reaction is a quinol + 2 Fe(III)-[cytochrome c](out) = a quinone + 2 Fe(II)-[cytochrome c](out) + 2 H(+)(out). In terms of biological role, component of the ubiquinol-cytochrome c oxidoreductase, a multisubunit transmembrane complex that is part of the mitochondrial electron transport chain which drives oxidative phosphorylation. The respiratory chain contains 3 multisubunit complexes succinate dehydrogenase (complex II, CII), ubiquinol-cytochrome c oxidoreductase (cytochrome b-c1 complex, complex III, CIII) and cytochrome c oxidase (complex IV, CIV), that cooperate to transfer electrons derived from NADH and succinate to molecular oxygen, creating an electrochemical gradient over the inner membrane that drives transmembrane transport and the ATP synthase. The cytochrome b-c1 complex catalyzes electron transfer from ubiquinol to cytochrome c, linking this redox reaction to translocation of protons across the mitochondrial inner membrane, with protons being carried across the membrane as hydrogens on the quinol. In the process called Q cycle, 2 protons are consumed from the matrix, 4 protons are released into the intermembrane space and 2 electrons are passed to cytochrome c. Cytochrome c1 is a catalytic core subunit containing a c-type heme. It transfers electrons from the [2Fe-2S] iron-sulfur cluster of the Rieske protein to cytochrome c. The sequence is that of Cytochrome c1, heme protein, mitochondrial (CYT1) from Kluyveromyces lactis (strain ATCC 8585 / CBS 2359 / DSM 70799 / NBRC 1267 / NRRL Y-1140 / WM37) (Yeast).